We begin with the raw amino-acid sequence, 278 residues long: Ras-related protein Rab-40B (278 aa).

Residues Ser23, Gly26, and Lys27 each coordinate GTP. The switch-I stretch occupies residues 41 to 49; the sequence is SPYGHPAGI. Mg(2+) is bound at residue Asp69. Positions 72, 126, and 127 each coordinate GTP. A switch-II region spans residues 72 to 88; the sequence is GQGRFCTIFRSYSRGAQ. Positions 175–228 constitute an SOCS box domain; sequence LLRHGMDRLWRPSKVLSLQDLCCRAVVSCTPVHLVDKLPLPIALRSHLKSFSMA. A disordered region spans residues 242–278; the sequence is SLTTSSTHKRSSLRKVKLVRPPQSPPKNCTRNSCKIS. Positions 248-259 are enriched in basic residues; the sequence is THKRSSLRKVKL. Positions 267 to 278 are enriched in polar residues; that stretch reads PKNCTRNSCKIS. The S-palmitoyl cysteine moiety is linked to residue Cys270. Cys275 is lipidated: S-geranylgeranyl cysteine.

This sequence belongs to the small GTPase superfamily. Rab family. In terms of assembly, component of the cullin-5-RING E3 ubiquitin-protein ligase complex (ECS(RAB40B) complex) composed of CUL5, Elongin BC (ELOB and ELOC), RNF7/RBX2 and RAB40B; RAB40B interaction with ECS complex is GTP-independent. Binds (GTP-bound) LIMA1; interaction promotes LIMA1 subcellular localization in lamellipodia during cell migration. Interacts (GTP-bound) with TKS5/SH3PXD2A (via PX domain); interaction promotes invadopodia-mediated extracellular matrix degradation. Mg(2+) serves as cofactor.

The protein localises to the cell membrane. It is found in the cytoplasm. The protein resides in the cytosol. Its subcellular location is the cell projection. It localises to the lamellipodium membrane. The protein localises to the ruffle. The enzyme catalyses GTP + H2O = GDP + phosphate + H(+). It participates in protein modification; protein ubiquitination. With respect to regulation, regulated by guanine nucleotide exchange factors (GEFs) which promote the exchange of bound GDP for free GTP. Regulated by GTPase activating proteins (GAPs) which increase the GTP hydrolysis activity. Inhibited by GDP dissociation inhibitors (GDIs). RAB40B small GTPase acts as substrate-recognition components of the ECS(RAB40B) E3 ubiquitin ligase complex which mediates the ubiquitination of target proteins. The Rab40 subfamily belongs to the Rab family that are key regulators of intracellular membrane trafficking, from the formation of transport vesicles to their fusion with membranes. Rabs cycle between an inactive GDP-bound form and an active GTP-bound form that is able to recruit to membranes different sets of downstream effectors directly responsible for vesicle formation, movement, tethering and fusion. As part of the ECS(RAB40B) complex, GTP-bound RAB40B promotes LIMA1/EPLIN ubiquitination and degradation, thereby regulating leading-edge actin dynamics during cell migration. As part of the ECS(RAB40B) complex, GTP-bound RAB40B also ubiquitinates RAP2A GTPase which promotes its localization to lamellipodia and activation to drive cell migration. The ECS(RAB40B) complex does not mediate canonical ubiquitin-dependent degradation of RAP2. RAB40B also binds TKS5/SH3PXD2A effector independently from ECS complex to promote invadopodia-mediated extracellular matrix degradation. The protein is Ras-related protein Rab-40B of Homo sapiens (Human).